Consider the following 438-residue polypeptide: Serine hydroxymethyltransferase 1 (438 aa).

(6S)-5,6,7,8-tetrahydrofolate is bound by residues Leu-130 and 134 to 136 (GHL). Lys-239 carries the post-translational modification N6-(pyridoxal phosphate)lysine.

The protein belongs to the SHMT family. As to quaternary structure, homodimer. Pyridoxal 5'-phosphate is required as a cofactor.

It localises to the cytoplasm. The catalysed reaction is (6R)-5,10-methylene-5,6,7,8-tetrahydrofolate + glycine + H2O = (6S)-5,6,7,8-tetrahydrofolate + L-serine. It participates in one-carbon metabolism; tetrahydrofolate interconversion. Its pathway is amino-acid biosynthesis; glycine biosynthesis; glycine from L-serine: step 1/1. In terms of biological role, catalyzes the reversible interconversion of serine and glycine with tetrahydrofolate (THF) serving as the one-carbon carrier. This reaction serves as the major source of one-carbon groups required for the biosynthesis of purines, thymidylate, methionine, and other important biomolecules. Also exhibits THF-independent aldolase activity toward beta-hydroxyamino acids, producing glycine and aldehydes, via a retro-aldol mechanism. The protein is Serine hydroxymethyltransferase 1 of Mycobacterium tuberculosis (strain CDC 1551 / Oshkosh).